The chain runs to 252 residues: Homeobox protein EMX2 (252 aa).

The segment at residues Pro154–Lys213 is a DNA-binding region (homeobox). Residues Gln212–Asp252 form a disordered region. Basic residues predominate over residues Lys224–Arg233.

Belongs to the EMX homeobox family. In terms of assembly, interacts with translation initiation factor EIF4E. As to expression, cerebral cortex.

The protein localises to the nucleus. It is found in the cell projection. The protein resides in the axon. Transcription factor, which in cooperation with EMX1, acts to generate the boundary between the roof and archipallium in the developing brain. May function in combination with OTX1/2 to specify cell fates in the developing central nervous system. In the inner ear, it controls the distribution of GPR156 at hair cell boundaries, and regulates the organization of stereociliary bundles in opposite orientations across the line of polarity reversal (LPR). The sequence is that of Homeobox protein EMX2 (EMX2) from Homo sapiens (Human).